The primary structure comprises 303 residues: HTH-type transcriptional regulator CatM (303 aa).

In terms of domain architecture, HTH lysR-type spans 1 to 58; that stretch reads MELRHLRYFVTVVEEQSISKAAEKLCIAQPPLSRQIQKLEEELGIQLFERGFRPAKVT. The H-T-H motif DNA-binding region spans 18–37; that stretch reads ISKAAEKLCIAQPPLSRQIQ. Cis,cis-muconate contacts are provided by Ser99 and Thr128.

This sequence belongs to the LysR transcriptional regulatory family. In terms of assembly, homotetramer in solution.

Its function is as follows. Positively regulates the expression of catA, catBCIJFD and benPK in response to cis,cis-muconate. It binds to the catB-catM intercistronic region, to a specific sequence upstream of catA and to the benPK promoter region. Can also repress pca genes. The protein is HTH-type transcriptional regulator CatM (catM) of Acinetobacter baylyi (strain ATCC 33305 / BD413 / ADP1).